Here is a 143-residue protein sequence, read N- to C-terminus: Large ribosomal subunit protein uL11 (143 aa).

This sequence belongs to the universal ribosomal protein uL11 family. As to quaternary structure, part of the ribosomal stalk of the 50S ribosomal subunit. Interacts with L10 and the large rRNA to form the base of the stalk. L10 forms an elongated spine to which L12 dimers bind in a sequential fashion forming a multimeric L10(L12)X complex. Post-translationally, one or more lysine residues are methylated.

In terms of biological role, forms part of the ribosomal stalk which helps the ribosome interact with GTP-bound translation factors. The polypeptide is Large ribosomal subunit protein uL11 (Acidovorax ebreus (strain TPSY) (Diaphorobacter sp. (strain TPSY))).